The following is a 331-amino-acid chain: Ketol-acid reductoisomerase (NADP(+)) (331 aa).

The KARI N-terminal Rossmann domain occupies 2 to 182 (AQLFYDSDAD…GGTRAGILET (181 aa)). Residues 25 to 28 (YGSQ), serine 51, serine 53, and 83 to 86 (DEFQ) contribute to the NADP(+) site. Histidine 108 is a catalytic residue. Glycine 134 contacts NADP(+). One can recognise a KARI C-terminal knotted domain in the interval 183–328 (NFKEETETDL…KGLRSMFSWL (146 aa)). Residues aspartate 191, glutamate 195, glutamate 227, and glutamate 231 each contribute to the Mg(2+) site. Residue serine 252 participates in substrate binding.

It belongs to the ketol-acid reductoisomerase family. The cofactor is Mg(2+).

The enzyme catalyses (2R)-2,3-dihydroxy-3-methylbutanoate + NADP(+) = (2S)-2-acetolactate + NADPH + H(+). It catalyses the reaction (2R,3R)-2,3-dihydroxy-3-methylpentanoate + NADP(+) = (S)-2-ethyl-2-hydroxy-3-oxobutanoate + NADPH + H(+). The protein operates within amino-acid biosynthesis; L-isoleucine biosynthesis; L-isoleucine from 2-oxobutanoate: step 2/4. It functions in the pathway amino-acid biosynthesis; L-valine biosynthesis; L-valine from pyruvate: step 2/4. Involved in the biosynthesis of branched-chain amino acids (BCAA). Catalyzes an alkyl-migration followed by a ketol-acid reduction of (S)-2-acetolactate (S2AL) to yield (R)-2,3-dihydroxy-isovalerate. In the isomerase reaction, S2AL is rearranged via a Mg-dependent methyl migration to produce 3-hydroxy-3-methyl-2-ketobutyrate (HMKB). In the reductase reaction, this 2-ketoacid undergoes a metal-dependent reduction by NADPH to yield (R)-2,3-dihydroxy-isovalerate. The chain is Ketol-acid reductoisomerase (NADP(+)) from Parasynechococcus marenigrum (strain WH8102).